Consider the following 242-residue polypeptide: Type III pantothenate kinase (242 aa).

6-13 (DAGNTRLK) is an ATP binding site. Substrate contacts are provided by residues Tyr-90 and 97–100 (GADR). Catalysis depends on Asp-99, which acts as the Proton acceptor. Asp-119 provides a ligand contact to K(+). Residue Ser-122 participates in ATP binding. A substrate-binding site is contributed by Thr-174.

It belongs to the type III pantothenate kinase family. In terms of assembly, homodimer. Requires NH4(+) as cofactor. K(+) serves as cofactor.

Its subcellular location is the cytoplasm. It catalyses the reaction (R)-pantothenate + ATP = (R)-4'-phosphopantothenate + ADP + H(+). Its pathway is cofactor biosynthesis; coenzyme A biosynthesis; CoA from (R)-pantothenate: step 1/5. Functionally, catalyzes the phosphorylation of pantothenate (Pan), the first step in CoA biosynthesis. This chain is Type III pantothenate kinase, found in Marinobacter nauticus (strain ATCC 700491 / DSM 11845 / VT8) (Marinobacter aquaeolei).